Here is a 198-residue protein sequence, read N- to C-terminus: NAD(P)H dehydrogenase (quinone) (198 aa).

One can recognise a Flavodoxin-like domain in the interval 4–189; that stretch reads VLVLYYSMYG…ALARYQGRHV (186 aa). FMN contacts are provided by residues 10 to 15 and 78 to 80; these read SMYGHV and TRF. Position 12 (Y12) interacts with NAD(+). W98 serves as a coordination point for substrate. FMN contacts are provided by residues 113–118 and H133; that span reads STGTGG.

The protein belongs to the WrbA family. FMN serves as cofactor.

The enzyme catalyses a quinone + NADH + H(+) = a quinol + NAD(+). It carries out the reaction a quinone + NADPH + H(+) = a quinol + NADP(+). The sequence is that of NAD(P)H dehydrogenase (quinone) from Halorhodospira halophila (strain DSM 244 / SL1) (Ectothiorhodospira halophila (strain DSM 244 / SL1)).